The sequence spans 238 residues: Uridylate kinase (238 aa).

12 to 15 contributes to the ATP binding site; that stretch reads KLSG. G54 is a UMP binding site. ATP contacts are provided by G55 and R59. UMP-binding positions include D74 and 135 to 142; that span reads TGNPFFTT. Positions 162, 163, 168, and 171 each coordinate ATP.

It belongs to the UMP kinase family. As to quaternary structure, homohexamer.

It localises to the cytoplasm. The enzyme catalyses UMP + ATP = UDP + ADP. The protein operates within pyrimidine metabolism; CTP biosynthesis via de novo pathway; UDP from UMP (UMPK route): step 1/1. Its activity is regulated as follows. Inhibited by UTP. Functionally, catalyzes the reversible phosphorylation of UMP to UDP. The chain is Uridylate kinase from Rhodopseudomonas palustris (strain BisB18).